The following is a 205-amino-acid chain: GTP cyclohydrolase 1 (205 aa).

Residues cysteine 95, histidine 98, and cysteine 166 each contribute to the Zn(2+) site.

This sequence belongs to the GTP cyclohydrolase I family. Toroid-shaped homodecamer, composed of two pentamers of five dimers.

It catalyses the reaction GTP + H2O = 7,8-dihydroneopterin 3'-triphosphate + formate + H(+). Its pathway is cofactor biosynthesis; 7,8-dihydroneopterin triphosphate biosynthesis; 7,8-dihydroneopterin triphosphate from GTP: step 1/1. The protein is GTP cyclohydrolase 1 of Maricaulis maris (strain MCS10) (Caulobacter maris).